Here is a 1551-residue protein sequence, read N- to C-terminus: MGFCLALTWTFLVGSWTSMGAQKPISWEVQRFDGWYNNLMEHKWGSKGSRLQRLVPASYADGVYQPLGEPHLPNPRDLSNAAMRGPAGQASLRNRTVLGVFFGYHVLSDLVSVETPGCPAEFLNIRIPPGDPVFDPNGRGDVVLPFQRSRWDPESGQSPSNPRDLTNAVTGWLDGSAIYGSSHSWSDALRSFSGGQLASGPDPAFPRNAQPPLLMWSAPDPASGQRGPGGLYAFGAERGNRDPFLQALGLLWFRYHNLCAQRLARQHPHWGDEELFQHARKRVIATYQNIALYEWLPSFLQQAPVKYAGYNPFLDPSISPEFLVASEQFFSTMVPPGIYMRNASCHFQEVINRNSSISRALRVCNSYWSRKHPNLRRAEDVDALLLGMASQIAEREDHVVVEDVLDFWPGSLKFSRTDHVAGCLQRGRDLGLPSYTKARAALGLPPITRWQDINPALSQNNHTVLEATAALYNQDLSQLELLPGGLLESHGDPGPLFSAIVLNQFVRLRDGDRYWFENTRNGLFSEEEIAEIRNTSLRDVLVAVTNMNPSTLQPNVFFWHMGDPCPQPRQLSTQGLPACAPSTMQDYFEGSGFGFGVTIGTLCCFPLVSLLSAWIVARLRKKNFKKLQGQDRKSVMSEKLVGGMEALEWQGHKEPCRPVLVHLQPGQICVVDGRLSVLRTIQLRPPQQVNLILSGNRGRRALLLKIPKEYDLVLLFNLEEERQVLVENLRGALKESGLKFQEWELREQELMRTAVTRQQRSHLLETFFRHLFSQVLDIDQADAGTLPLDSSQKVQEALTCELSRAEFAESLGLKPQDMFVESMFSLADKDGNGYLSFREFLDILVVFMKGSPEEKSRLMFRMYDFDGNGLISKDEFIRMLRSFIEISNNCLSKAQLTEVVESMFRESGFQDKEELTWEDFHFMLRDHDSELRFTQLCVRGVEVPEVIKDLCRRASYISQEKICPSPRVSARCPHSNTEVEWTPQRLQCPVDTDPPQEIRRRFGKKVTSFQPLLFTEAQREKFQRSRRHQTLQQFKRFIENYRRHIGCVAVFYAITGGLFLERAYYYAFGAHHMGITDTTRVGIILSRGTAASISFMFSYILLTMCRNLITFLRETFLNRYVPFDAAVDFHRLIASTAIVLTVLHSAGHVVNVYLFSISPLSVLSCLFPGLFHNDGSEFPQKYYWWFFQTVPGLTGVMLLLVLAIMYVFASHHFRRHSFRGFWLTHHLYILLYVLLIIHGSFGLIQLPRFHIFFLVPALIYVGDKLVSLSRKKVEISVVKAELLPSGVTHLQFQRPQGFEYKSGQWVQIACLALGTTEYHPFTLTSAPHEDTLSLHIRAAGPWTTRLREIYSPPTGDGCAKYPKLYLDGPFGEGHQEWHKFEVSVLVGGGIGVTPFASILKDLVFKSSVSCQVFCKKIYFIWVTRTQRQFEWLADIIREVEENDCQDLVSVHIYITQLAEKFDLRTTMLYICERHFQKVLNRSLFTGLRSITHFGRPPFEPFFKSLQEVHPQVRKIGVFSCGPPGMTKNVEKACQLINRQDRTHFSHHYENF.

Residues 1–21 form the signal peptide; it reads MGFCLALTWTFLVGSWTSMGA. Topologically, residues 22 to 596 are extracellular; the sequence is QKPISWEVQR…YFEGSGFGFG (575 aa). Residues 26–593 form a peroxidase-like; mediates peroxidase activity region; it reads SWEVQRFDGW…MQDYFEGSGF (568 aa). An N-linked (GlcNAc...) asparagine glycan is attached at Asn94. A disordered region spans residues 197-222; that stretch reads LASGPDPAFPRNAQPPLLMWSAPDPA. N-linked (GlcNAc...) asparagine glycosylation is found at Asn342, Asn354, Asn461, and Asn534. Residues 597–617 form a helical membrane-spanning segment; it reads VTIGTLCCFPLVSLLSAWIVA. Topologically, residues 618 to 1044 are cytoplasmic; it reads RLRKKNFKKL…KRFIENYRRH (427 aa). EF-hand domains follow at residues 815–850, 851–886, and 895–930; these read PQDMFVESMFSLADKDGNGYLSFREFLDILVVFMKG, SPEEKSRLMFRMYDFDGNGLISKDEFIRMLRSFIEI, and QLTEVVESMFRESGFQDKEELTWEDFHFMLRDHDSE. Asp828, Asp830, Asn832, Tyr834, Glu839, Asp864, Asp866, Asn868, and Glu875 together coordinate Ca(2+). Residues 956-1248 are interaction with TXNDC11; the sequence is YISQEKICPS…GSFGLIQLPR (293 aa). Residues 1045-1065 traverse the membrane as a helical segment; the sequence is IGCVAVFYAITGGLFLERAYY. At 1066 to 1080 the chain is on the extracellular side; the sequence is YAFGAHHMGITDTTR. Residues 1081-1101 traverse the membrane as a helical segment; sequence VGIILSRGTAASISFMFSYIL. A Ferric oxidoreductase domain is found at 1087 to 1269; the sequence is RGTAASISFM…YVGDKLVSLS (183 aa). Residues 1102–1151 are Cytoplasmic-facing; sequence LTMCRNLITFLRETFLNRYVPFDAAVDFHRLIASTAIVLTVLHSAGHVVN. The chain crosses the membrane as a helical span at residues 1152–1172; it reads VYLFSISPLSVLSCLFPGLFH. Residues 1173 to 1188 are Extracellular-facing; the sequence is NDGSEFPQKYYWWFFQ. A helical transmembrane segment spans residues 1189–1209; that stretch reads TVPGLTGVMLLLVLAIMYVFA. Residues 1210–1226 are Cytoplasmic-facing; that stretch reads SHHFRRHSFRGFWLTHH. The helical transmembrane segment at 1227 to 1247 threads the bilayer; sequence LYILLYVLLIIHGSFGLIQLP. Residue Arg1248 is a topological domain, extracellular. The helical transmembrane segment at 1249–1269 threads the bilayer; that stretch reads FHIFFLVPALIYVGDKLVSLS. An FAD-binding FR-type domain is found at 1270 to 1376; the sequence is RKKVEISVVK…DGPFGEGHQE (107 aa). Residues 1270–1551 are Cytoplasmic-facing; the sequence is RKKVEISVVK…THFSHHYENF (282 aa).

The protein in the N-terminal section; belongs to the peroxidase family. As to quaternary structure, interacts with TPO and CYBA. Interacts with TXNDC11. In terms of processing, N-glycosylated. As to expression, expressed in thyrocytes (at protein level). Specifically expressed in thyroid.

The protein resides in the apical cell membrane. The catalysed reaction is NADH + O2 + H(+) = H2O2 + NAD(+). It carries out the reaction NADPH + O2 + H(+) = H2O2 + NADP(+). It participates in hormone biosynthesis; thyroid hormone biosynthesis. Peroxidase activity is inhibited by aminobenzohydrazide. The NADPH oxidase activity is calcium-dependent. Its function is as follows. Generates hydrogen peroxide which is required for the activity of thyroid peroxidase/TPO and lactoperoxidase/LPO. Plays a role in thyroid hormones synthesis and lactoperoxidase-mediated antimicrobial defense at the surface of mucosa. May have its own peroxidase activity through its N-terminal peroxidase-like domain. The sequence is that of Dual oxidase 1 (DUOX1) from Canis lupus familiaris (Dog).